A 212-amino-acid polypeptide reads, in one-letter code: Uracil phosphoribosyltransferase (212 aa).

5-phospho-alpha-D-ribose 1-diphosphate is bound by residues Arg78, Arg103, and Asp130 to Ser138. Uracil is bound by residues Ile193 and Gly198–Ala200. Asp199 contributes to the 5-phospho-alpha-D-ribose 1-diphosphate binding site.

It belongs to the UPRTase family. The cofactor is Mg(2+).

It catalyses the reaction UMP + diphosphate = 5-phospho-alpha-D-ribose 1-diphosphate + uracil. The protein operates within pyrimidine metabolism; UMP biosynthesis via salvage pathway; UMP from uracil: step 1/1. With respect to regulation, allosterically activated by GTP. Functionally, catalyzes the conversion of uracil and 5-phospho-alpha-D-ribose 1-diphosphate (PRPP) to UMP and diphosphate. This Pseudomonas savastanoi pv. phaseolicola (strain 1448A / Race 6) (Pseudomonas syringae pv. phaseolicola (strain 1448A / Race 6)) protein is Uracil phosphoribosyltransferase.